The primary structure comprises 313 residues: Ornithine carbamoyltransferase (313 aa).

Carbamoyl phosphate-binding positions include serine 57–threonine 60, glutamine 84, arginine 108, and histidine 135–glutamine 138. L-ornithine-binding positions include asparagine 167, aspartate 231, and serine 235–methionine 236. Carbamoyl phosphate is bound by residues cysteine 272–leucine 273 and arginine 300.

It belongs to the aspartate/ornithine carbamoyltransferase superfamily. OTCase family.

It localises to the cytoplasm. It catalyses the reaction carbamoyl phosphate + L-ornithine = L-citrulline + phosphate + H(+). It participates in amino-acid biosynthesis; L-arginine biosynthesis; L-arginine from L-ornithine and carbamoyl phosphate: step 1/3. In terms of biological role, reversibly catalyzes the transfer of the carbamoyl group from carbamoyl phosphate (CP) to the N(epsilon) atom of ornithine (ORN) to produce L-citrulline. This Pseudothermotoga lettingae (strain ATCC BAA-301 / DSM 14385 / NBRC 107922 / TMO) (Thermotoga lettingae) protein is Ornithine carbamoyltransferase.